Reading from the N-terminus, the 453-residue chain is Bifunctional protein GlmU (453 aa).

The interval 1–225 is pyrophosphorylase; sequence MNIVILAAGT…DWETLGVNSK (225 aa). UDP-N-acetyl-alpha-D-glucosamine-binding positions include 6 to 9, K20, Q71, 76 to 77, 98 to 100, G135, E150, N165, and N223; these read LAAG, GT, and YGD. Mg(2+) is bound at residue D100. N223 contacts Mg(2+). Positions 226-246 are linker; the sequence is AQLAELERIHQRNVADALLVE. The N-acetyltransferase stretch occupies residues 247–453; the sequence is GVTLADPARV…GYVRPVKKKS (207 aa). 2 residues coordinate UDP-N-acetyl-alpha-D-glucosamine: R329 and K347. Residue H359 is the Proton acceptor of the active site. UDP-N-acetyl-alpha-D-glucosamine contacts are provided by Y362 and N373. Acetyl-CoA-binding positions include A376, 382-383, S401, and A419; that span reads NY.

In the N-terminal section; belongs to the N-acetylglucosamine-1-phosphate uridyltransferase family. The protein in the C-terminal section; belongs to the transferase hexapeptide repeat family. Homotrimer. Mg(2+) is required as a cofactor.

The protein resides in the cytoplasm. It catalyses the reaction alpha-D-glucosamine 1-phosphate + acetyl-CoA = N-acetyl-alpha-D-glucosamine 1-phosphate + CoA + H(+). The catalysed reaction is N-acetyl-alpha-D-glucosamine 1-phosphate + UTP + H(+) = UDP-N-acetyl-alpha-D-glucosamine + diphosphate. The protein operates within nucleotide-sugar biosynthesis; UDP-N-acetyl-alpha-D-glucosamine biosynthesis; N-acetyl-alpha-D-glucosamine 1-phosphate from alpha-D-glucosamine 6-phosphate (route II): step 2/2. It functions in the pathway nucleotide-sugar biosynthesis; UDP-N-acetyl-alpha-D-glucosamine biosynthesis; UDP-N-acetyl-alpha-D-glucosamine from N-acetyl-alpha-D-glucosamine 1-phosphate: step 1/1. It participates in bacterial outer membrane biogenesis; LPS lipid A biosynthesis. Its function is as follows. Catalyzes the last two sequential reactions in the de novo biosynthetic pathway for UDP-N-acetylglucosamine (UDP-GlcNAc). The C-terminal domain catalyzes the transfer of acetyl group from acetyl coenzyme A to glucosamine-1-phosphate (GlcN-1-P) to produce N-acetylglucosamine-1-phosphate (GlcNAc-1-P), which is converted into UDP-GlcNAc by the transfer of uridine 5-monophosphate (from uridine 5-triphosphate), a reaction catalyzed by the N-terminal domain. The sequence is that of Bifunctional protein GlmU from Burkholderia vietnamiensis (strain G4 / LMG 22486) (Burkholderia cepacia (strain R1808)).